We begin with the raw amino-acid sequence, 442 residues long: MRLSRYFLPILKENPKEAEIVSHRLMLRSGMIRQQSAGIYSWLPIGLKVLNKVCTIIREEQNRAGANEILMPTIQSADLWRESGRYDAYGKEMLRIQDRQEREMLFGPTNEEMVTDIFRSYVRSYKDLPLNLYHIQWKFRDEVRPRFGVMRSREFLMKDAYSFDLDYEGAKMAYYRMFVSYLRTFARVGLQAIPMRADTGPIGGDLSHEFIILAETGESQVYCDRAYLDLAVPGADTDFRNDAQLTDIVTRWTTPYAATDEMHDEADWAKVKPESQVSARGIEVGHIFHFGTKYSEPMGAKVQGPDGKEHLVFMGSYGIGPSRLVAAAIEASHDDAGIIWPKAIAPFGAGIVNMKPGDEGCDGVSEKLYEALTNAGVDPLLDDKDERPGAKFATMDLIGLPTQVIVGPRGVAAGEVEVKDRKTGERQSLDIEAAINMLTAQA.

It belongs to the class-II aminoacyl-tRNA synthetase family. ProS type 2 subfamily. As to quaternary structure, homodimer.

The protein resides in the cytoplasm. The catalysed reaction is tRNA(Pro) + L-proline + ATP = L-prolyl-tRNA(Pro) + AMP + diphosphate. Functionally, catalyzes the attachment of proline to tRNA(Pro) in a two-step reaction: proline is first activated by ATP to form Pro-AMP and then transferred to the acceptor end of tRNA(Pro). In Brucella ovis (strain ATCC 25840 / 63/290 / NCTC 10512), this protein is Proline--tRNA ligase.